A 307-amino-acid polypeptide reads, in one-letter code: MmsAB operon regulatory protein (307 aa).

An HTH araC/xylS-type domain is found at 201–299; that stretch reads DGLHAYMREH…GLSPSAYRQR (99 aa). 2 consecutive DNA-binding regions (H-T-H motif) follow at residues 218–239 and 266–289; these read ERLAAFCNLSKFHFVSRYKAIT and VARVGQAVGYDDSYYFSRLFSKVM.

Its function is as follows. Regulatory protein for the mmsAB operon. Activates the transcription of the mmsAB genes. In Pseudomonas aeruginosa (strain ATCC 15692 / DSM 22644 / CIP 104116 / JCM 14847 / LMG 12228 / 1C / PRS 101 / PAO1), this protein is MmsAB operon regulatory protein.